The primary structure comprises 359 residues: E2F transcription factor-like E2FD (359 aa).

DNA-binding regions lie at residues 13–78 (RKDK…SWKG) and 138–217 (RKER…RWLG). Disordered regions lie at residues 255–274 (RNKS…QNTS) and 288–313 (DVKN…NNIR). Residues 293 to 309 (ASGSSTPAGTSESNDMG) show a composition bias toward polar residues.

It belongs to the E2F/DP family. Monomer. No interactions with DPA or E2FA. Preferentially expressed in proliferating tissues. Highly expressed in young stalk and young flowers. Lower expression in young leaves and mature flowers. Detected in cotyledonary vascular tissues, the shoot apical meristem, the base of trichomes, the fully developed stomata, the central root cylinder and in the columella of lateral roots but not in the primary root tips or in the leaf epidermal cells.

Its subcellular location is the nucleus. Inhibitor of E2F-dependent regulation of gene expression. Binds specifically the E2 recognition site as a monomer without interacting with DP proteins. May be up-regulating E2FA and down-regulating repressors of cell cycle progression. Promotes cell proliferation and represses cell elongation. Regulated by proteolysis via a ubiquitin-proteasome pathway. This chain is E2F transcription factor-like E2FD (E2FD), found in Arabidopsis thaliana (Mouse-ear cress).